A 562-amino-acid chain; its full sequence is Undecaprenyl phosphate-alpha-4-amino-4-deoxy-L-arabinose arabinosyl transferase (562 aa).

A run of 12 helical transmembrane segments spans residues 14–34 (IKFS…PLNY), 91–111 (FSVR…IYLF), 120–140 (ILSL…IIGT), 142–162 (SVLD…FWLA), 186–206 (FITK…IWLF), 215–235 (TIIH…PWIY), 267–287 (PFWY…GFLF), 302–322 (IEFY…ISKG), 324–344 (LPTY…KNIE), 354–374 (LLKI…IFII), 395–415 (LILC…IIFN), and 425–445 (LSII…IIYA).

Belongs to the glycosyltransferase 83 family.

It localises to the cell inner membrane. It catalyses the reaction 4-amino-4-deoxy-alpha-L-arabinopyranosyl di-trans,octa-cis-undecaprenyl phosphate + lipid IVA = lipid IIA + di-trans,octa-cis-undecaprenyl phosphate.. The protein operates within lipopolysaccharide metabolism; 4-amino-4-deoxy-beta-L-arabinose-lipid A biosynthesis. Functionally, catalyzes the transfer of the L-Ara4N moiety of the glycolipid undecaprenyl phosphate-alpha-L-Ara4N to lipid A. The modified arabinose is attached to lipid A and is required for resistance to polymyxin and cationic antimicrobial peptides. This chain is Undecaprenyl phosphate-alpha-4-amino-4-deoxy-L-arabinose arabinosyl transferase, found in Wigglesworthia glossinidia brevipalpis.